The sequence spans 524 residues: Glucose-6-phosphate isomerase (524 aa).

Catalysis depends on glutamate 322, which acts as the Proton donor. Active-site residues include histidine 351 and lysine 453.

This sequence belongs to the GPI family.

Its subcellular location is the cytoplasm. It catalyses the reaction alpha-D-glucose 6-phosphate = beta-D-fructose 6-phosphate. It functions in the pathway carbohydrate biosynthesis; gluconeogenesis. The protein operates within carbohydrate degradation; glycolysis; D-glyceraldehyde 3-phosphate and glycerone phosphate from D-glucose: step 2/4. In terms of biological role, catalyzes the reversible isomerization of glucose-6-phosphate to fructose-6-phosphate. This is Glucose-6-phosphate isomerase from Prochlorococcus marinus (strain NATL2A).